The chain runs to 719 residues: Ribosomal RNA large subunit methyltransferase K/L (719 aa).

The THUMP domain occupies 43 to 154 (TQYRVLLWTR…REELVISLDL (112 aa)).

This sequence belongs to the methyltransferase superfamily. RlmKL family.

It localises to the cytoplasm. It catalyses the reaction guanosine(2445) in 23S rRNA + S-adenosyl-L-methionine = N(2)-methylguanosine(2445) in 23S rRNA + S-adenosyl-L-homocysteine + H(+). The enzyme catalyses guanosine(2069) in 23S rRNA + S-adenosyl-L-methionine = N(2)-methylguanosine(2069) in 23S rRNA + S-adenosyl-L-homocysteine + H(+). Functionally, specifically methylates the guanine in position 2445 (m2G2445) and the guanine in position 2069 (m7G2069) of 23S rRNA. This Pasteurella multocida (strain Pm70) protein is Ribosomal RNA large subunit methyltransferase K/L.